Here is a 311-residue protein sequence, read N- to C-terminus: Dihydroorotate dehydrogenase B (NAD(+)), catalytic subunit (311 aa).

Substrate-binding positions include lysine 52, asparagine 76 to leucine 80, and asparagine 133. Lysine 52–serine 53 provides a ligand contact to FMN. Residue asparagine 133 participates in FMN binding. The active-site Nucleophile is cysteine 136. FMN-binding residues include lysine 171 and isoleucine 197. Asparagine 198–threonine 199 contacts substrate. FMN is bound by residues glycine 223, glycine 249–glycine 250, and glycine 271–serine 272.

Belongs to the dihydroorotate dehydrogenase family. Type 1 subfamily. Heterotetramer of 2 PyrK and 2 PyrD type B subunits. FMN serves as cofactor.

The protein localises to the cytoplasm. It carries out the reaction (S)-dihydroorotate + NAD(+) = orotate + NADH + H(+). It participates in pyrimidine metabolism; UMP biosynthesis via de novo pathway; orotate from (S)-dihydroorotate (NAD(+) route): step 1/1. Its function is as follows. Catalyzes the conversion of dihydroorotate to orotate with NAD(+) as electron acceptor. The protein is Dihydroorotate dehydrogenase B (NAD(+)), catalytic subunit (pyrD) of Methanosarcina acetivorans (strain ATCC 35395 / DSM 2834 / JCM 12185 / C2A).